The following is a 396-amino-acid chain: Pyruvate dehydrogenase E1 component subunit alpha type I, mitochondrial (396 aa).

The N-terminal 25 residues, 1–25 (MIFVFANIFKVPTVSPSVMAISVRL), are a transit peptide targeting the mitochondrion. Pyruvate-binding residues include His-88, Tyr-114, Arg-115, Gly-153, Gly-161, Val-163, Asp-192, Gly-193, Ala-194, Asn-221, and Tyr-223. Residues Tyr-114 and Arg-115 each coordinate thiamine diphosphate. Positions 161, 163, 192, 193, 194, and 221 each coordinate thiamine diphosphate. Asp-192 contributes to the Mg(2+) binding site. 2 residues coordinate Mg(2+): Asn-221 and Tyr-223. His-288 serves as a coordination point for thiamine diphosphate. Phosphoserine is present on residues Ser-289 and Ser-296.

As to quaternary structure, heterotetramer of two PDHA1 and two PDHB subunits. The heterotetramer interacts with DLAT, and is part of the multimeric pyruvate dehydrogenase complex that contains multiple copies of pyruvate dehydrogenase (E1), dihydrolipoamide acetyltransferase (DLAT, E2) and lipoamide dehydrogenase (DLD, E3). Thiamine diphosphate is required as a cofactor. Mg(2+) serves as cofactor.

Its subcellular location is the mitochondrion matrix. The enzyme catalyses N(6)-[(R)-lipoyl]-L-lysyl-[protein] + pyruvate + H(+) = N(6)-[(R)-S(8)-acetyldihydrolipoyl]-L-lysyl-[protein] + CO2. Pyruvate dehydrogenase activity is inhibited by phosphorylation of PDHA1; it is reactivated by dephosphorylation. The pyruvate dehydrogenase complex catalyzes the overall conversion of pyruvate to acetyl-CoA and CO(2), and thereby links the glycolytic pathway to the tricarboxylic cycle. The polypeptide is Pyruvate dehydrogenase E1 component subunit alpha type I, mitochondrial (Ascaris suum (Pig roundworm)).